Consider the following 118-residue polypeptide: Small ribosomal subunit protein uS13 (118 aa).

The interval 94–118 (GLPLRGQRTKTNARTRKGRRKGTSS) is disordered.

The protein belongs to the universal ribosomal protein uS13 family. In terms of assembly, part of the 30S ribosomal subunit. Forms a loose heterodimer with protein S19. Forms two bridges to the 50S subunit in the 70S ribosome.

Its function is as follows. Located at the top of the head of the 30S subunit, it contacts several helices of the 16S rRNA. In the 70S ribosome it contacts the 23S rRNA (bridge B1a) and protein L5 of the 50S subunit (bridge B1b), connecting the 2 subunits; these bridges are implicated in subunit movement. Contacts the tRNAs in the A and P-sites. This Legionella pneumophila (strain Paris) protein is Small ribosomal subunit protein uS13.